Consider the following 492-residue polypeptide: Dynein regulatory complex subunit 2 (492 aa).

3 coiled-coil regions span residues 16 to 95 (LTEE…FERV), 256 to 318 (VQSA…AAQA), and 373 to 401 (LSEE…HDYS).

Belongs to the DRC2 family. In terms of assembly, component of the nexin-dynein regulatory complex (N-DRC).

The protein localises to the cytoplasm. It localises to the cytoskeleton. Its subcellular location is the flagellum basal body. It is found in the cell projection. The protein resides in the cilium. The protein localises to the flagellum. It localises to the flagellum axoneme. Component of the nexin-dynein regulatory complex (N-DRC), a key regulator of ciliary/flagellar motility which maintains the alignment and integrity of the distal axoneme and regulates microtubule sliding in motile axonemes. Plays a critical role in the assembly of N-DRC and also stabilizes the assembly of multiple inner dynein arms and radial spokes. Coassembles with DRC1 to form a central scaffold needed for assembly of the N-DRC and its attachment to the outer doublet microtubules. The chain is Dynein regulatory complex subunit 2 (ccdc65) from Danio rerio (Zebrafish).